The following is a 132-amino-acid chain: Large ribosomal subunit protein uL14 (132 aa).

The protein belongs to the universal ribosomal protein uL14 family. In terms of assembly, part of the 50S ribosomal subunit. Forms a cluster with proteins L3 and L24e, part of which may contact the 16S rRNA in 2 intersubunit bridges.

In terms of biological role, binds to 23S rRNA. Forms part of two intersubunit bridges in the 70S ribosome. This is Large ribosomal subunit protein uL14 from Methanocella arvoryzae (strain DSM 22066 / NBRC 105507 / MRE50).